The following is a 284-amino-acid chain: Dihydropteroate synthase (284 aa).

Positions 6–265 (VQVIGVLNVT…DVRASVDALK (260 aa)) constitute a Pterin-binding domain. Asparagine 13 lines the Mg(2+) pocket. (7,8-dihydropterin-6-yl)methyl diphosphate-binding positions include threonine 53, aspartate 86, asparagine 105, aspartate 177, lysine 213, and 253–255 (RVH).

This sequence belongs to the DHPS family. As to quaternary structure, homodimer. It depends on Mg(2+) as a cofactor.

The enzyme catalyses (7,8-dihydropterin-6-yl)methyl diphosphate + 4-aminobenzoate = 7,8-dihydropteroate + diphosphate. The protein operates within cofactor biosynthesis; tetrahydrofolate biosynthesis; 7,8-dihydrofolate from 2-amino-4-hydroxy-6-hydroxymethyl-7,8-dihydropteridine diphosphate and 4-aminobenzoate: step 1/2. Its activity is regulated as follows. Is potently inhibited by the sulfone dapsone and the two sulfonamides sulfamethoxazole and sulfamethoxypyridazine, with Kis in the range of 12 to 32 nM. To a lesser extent, is also inhibited by p-aminosalicylate (PAS). In terms of biological role, catalyzes the condensation of para-aminobenzoate (pABA) with 6-hydroxymethyl-7,8-dihydropterin diphosphate (DHPt-PP) to form 7,8-dihydropteroate, the immediate precursor of folate derivatives. The sequence is that of Dihydropteroate synthase (folP1) from Mycobacterium leprae (strain TN).